The primary structure comprises 127 residues: Large ribosomal subunit protein bL20 (127 aa).

The protein belongs to the bacterial ribosomal protein bL20 family.

In terms of biological role, binds directly to 23S ribosomal RNA and is necessary for the in vitro assembly process of the 50S ribosomal subunit. It is not involved in the protein synthesizing functions of that subunit. This is Large ribosomal subunit protein bL20 from Renibacterium salmoninarum (strain ATCC 33209 / DSM 20767 / JCM 11484 / NBRC 15589 / NCIMB 2235).